Reading from the N-terminus, the 240-residue chain is GATA transcription factor 4 (240 aa).

Residues 104 to 124 (ISFTGKPRSRRSRAPAPSVAG) form a disordered region. The short motif at 109–116 (KPRSRRSR) is the Nuclear localization signal element. A GATA-type zinc finger spans residues 154-208 (ADGARRCTHCASEKTPQWRTGPLGPKTLCNACGVRYKSGRLVPEYRPASSPTFVL).

The protein belongs to the type IV zinc-finger family. Class A subfamily. In terms of tissue distribution, expressed in roots, flowers and leaves, and to a lower extent in stems.

It localises to the nucleus. Transcriptional activator that specifically binds 5'-GATA-3' or 5'-GAT-3' motifs within gene promoters. May be involved in the regulation of some light-responsive genes. In Arabidopsis thaliana (Mouse-ear cress), this protein is GATA transcription factor 4 (GATA4).